The chain runs to 218 residues: MPAINAKRVYRIMRQNALLLERKPAVPPSKRAHTGRVAVKESNQRWCSDGFEFCCDNGERLRVTFALDCCDREALHWAVTTGGFNSETVQDVMLGAVERRFGNDLPSSPVEWLTDNGSCYRANETRQFARMLGLEPKNTAVRSPESNGIAESFVKTIKRDYISIMPKPDGLTAAKNLAEAFEHYNEWHPHSALGYRSPREYLRQRACNGLSDNRCLEI.

The Integrase catalytic domain maps to 23–206; the sequence is KPAVPPSKRA…SPREYLRQRA (184 aa).

In terms of biological role, involved in the transposition of the insertion sequence IS2. The polypeptide is Putative transposase InsD for insertion element IS2E (insD8) (Escherichia coli (strain K12)).